Consider the following 641-residue polypeptide: Chaperone protein DnaK 2 (641 aa).

Thr-199 carries the post-translational modification Phosphothreonine; by autocatalysis. Low complexity predominate over residues 601-616 (MAQQQAQAQHAQSSQQ). The segment at 601–641 (MAQQQAQAQHAQSSQQTNDTTGQSSTDDDVFEAEFEEVKDK) is disordered. Over residues 626 to 635 (TDDDVFEAEF) the composition is skewed to acidic residues.

Belongs to the heat shock protein 70 family.

In terms of biological role, acts as a chaperone. In Photobacterium profundum (strain SS9), this protein is Chaperone protein DnaK 2.